The sequence spans 119 residues: Holo-[acyl-carrier-protein] synthase (119 aa).

Mg(2+) is bound by residues aspartate 8 and glutamate 60.

Belongs to the P-Pant transferase superfamily. AcpS family. Mg(2+) serves as cofactor.

The protein localises to the cytoplasm. The catalysed reaction is apo-[ACP] + CoA = holo-[ACP] + adenosine 3',5'-bisphosphate + H(+). Functionally, transfers the 4'-phosphopantetheine moiety from coenzyme A to a Ser of acyl-carrier-protein. The polypeptide is Holo-[acyl-carrier-protein] synthase (Staphylococcus haemolyticus (strain JCSC1435)).